Reading from the N-terminus, the 668-residue chain is MWPDDLYRIMCRGNYIEILSAITNYNLHKHGANQCENESIPFTAIHQALQLRQIDIVKELIQQNPKLIYVTDHRRNSTLHTICITPNVMDIVISLTVDCDIILDIKYASIILNKHKLGEACIHVLKEGISGNEISYNKINKSIEYMKLIKERIQQDELLIAEMLLKKGIDVNAKDVYCRTPIHYAAERGNTKMVNLLLSYGADVNIITLDDLSVLEYAVDSKNIDTIKAIIDNRSNINKNDLSLLKAIRNTDLETSLLLYDSGFSVNSIDVYKNTPLHYAVQAPSLSRLVPKLLERGIDVNAKNIKGETPLYLMAKNGYDTENIRTLIMRGADVNAADSLYITPLHQASTLDRYKDTVITLLELGANVNARDYCDKTPIHYAAVRNNVVIINTLLDYGADIEALSQKIGTVLHFALYGTNPYMSVKTLIDRGANVNSKNKYLSTPLHYACKKNCKPEVIKMLLDNGADVNAINIRNQYPLLIALEYHGIVNILLHYGAELRDSRVLHKSLNSNMFSFRYIIAHICIQDFIRHDIRSEVNPLREIIQSDDTFKSIWLSCKEELKDISKIRINMFYSLDIFVISKNMNLLHHLVNNPIIKEINTYYFYNYGDRLKTSISLASNRHKILEKSRSKLDEILDSSGWSKLPPDIKLSILEFIGNTELRKICNR.

ANK repeat units follow at residues 40–69 (IPFTAIHQALQLRQIDIVKELIQQNPKLIY), 144–173 (EYMKLIKERIQQDELLIAEMLLKKGIDVNA), 177–206 (YCRTPIHYAAERGNTKMVNLLLSYGADVNI), 210–239 (DDLSVLEYAVDSKNIDTIKAIIDNRSNINK), 272–302 (YKNTPLHYAVQAPSLSRLVPKLLERGIDVNA), 306–336 (KGETPLYLMAKNGYDTENIRTLIMRGADVNA), 340–370 (LYITPLHQASTLDRYKDTVITLLELGANVNA), 374–403 (CDKTPIHYAAVRNNVVIINTLLDYGADIEA), 407–437 (KIGTVLHFALYGTNPYMSVKTLIDRGANVNS), 441–471 (YLSTPLHYACKKNCKPEVIKMLLDNGADVNA), 473–502 (NIRNQYPLLIALEYHGIVNILLHYGAELRD), and 571–602 (NMFYSLDIFVISKNMNLLHHLVNNPIIKEINT).

In Vertebrata (FPV), this protein is Putative ankyrin repeat protein FPV244.